The primary structure comprises 385 residues: HAT1-interacting factor 1 (385 aa).

Residues 80-199 (GNLFGDALLA…RKSGFHIYFE (120 aa)) form an important for interaction with heterotetrameric histone H3 and H4 and for interaction with dimeric histone H2A and H2B region. 2 stretches are compositionally biased toward low complexity: residues 85 to 97 (DALL…SGSE) and 105 to 116 (DVSNGEEGNENG). Positions 85–163 (DALLAGDDGS…EEENVEKEEE (79 aa)) are disordered. Over residues 129 to 160 (DQEEEDLTGDVDSGDSEDSGEGSEEEEENVEK) the composition is skewed to acidic residues. Ser174 carries the phosphoserine modification. 3 TPR repeats span residues 186–220 (VSQL…LGRP), 229–262 (ENSR…YLKA), and 289–322 (ALRW…RPKD). The segment at 248 to 332 (EAEMFSRAIH…SELQQARLAQ (85 aa)) is interaction with dimeric histone H2A and H2B. Positions 340 to 385 (VQENQQHGSKRPLSQPTTSIGFPALEKPLGDFNDLSQLVKKKPRRH) are disordered. A compositionally biased stretch (polar residues) spans 342–359 (ENQQHGSKRPLSQPTTSI).

It belongs to the NASP family. As to quaternary structure, homodimer. The homodimer interacts with a histone tetramer containing H3 and H4; the interaction is direct. The homodimer interacts with heterodimeric histone H2A and H2B; the interaction is direct. Component of the nuclear histone acetyltransferase B (HAT-B) complex composed of at least HAT1, HAT2 and HIF1. Does not interact with HAT1 in the absence of HAT2. Interacts with histones H3 and H4 in a HAT1/HAT2 dependent manner. Interaction with heterotetrameric histone H3 and H4 precludes interaction with dimeric histone H2A and H2B, irrespective of the fact that their binding involves non-identical regions of the protein.

It localises to the nucleus. Its function is as follows. Histone H3 and H4 specific chaperone component of the nuclear histone acetyltransferase B (HAT-B) complex. Involved in chromatin assembly and telomere silencing. The polypeptide is HAT1-interacting factor 1 (HIF1) (Saccharomyces cerevisiae (strain ATCC 204508 / S288c) (Baker's yeast)).